Consider the following 317-residue polypeptide: Ribose-phosphate pyrophosphokinase A (317 aa).

Residues aspartate 130, histidine 132, and aspartate 145 each contribute to the Mg(2+) site. Residues 212–227 form a binding of phosphoribosylpyrophosphate region; sequence KDKVALIVDDMADTCG.

Belongs to the ribose-phosphate pyrophosphokinase family. Mg(2+) is required as a cofactor.

It catalyses the reaction D-ribose 5-phosphate + ATP = 5-phospho-alpha-D-ribose 1-diphosphate + AMP + H(+). It functions in the pathway metabolic intermediate biosynthesis; 5-phospho-alpha-D-ribose 1-diphosphate biosynthesis; 5-phospho-alpha-D-ribose 1-diphosphate from D-ribose 5-phosphate (route I): step 1/1. This chain is Ribose-phosphate pyrophosphokinase A (prsA), found in Dictyostelium discoideum (Social amoeba).